The primary structure comprises 153 residues: MNNKTFIDNLKELTEPIVNDLDYELYYLEFVNENKENYLRIYIDSESGIGLEDCEKVSRAVSAMLDEKDPIDTSYYLEVSSPGLERQLYDDKHIEDNIGKTACVRLESLFNGGRKFEGKLKSFDNENLTLEINAEDFKIPRKKIKRINLIYEG.

Belongs to the RimP family.

The protein resides in the cytoplasm. Its function is as follows. Required for maturation of 30S ribosomal subunits. The polypeptide is Ribosome maturation factor RimP (Clostridium tetani (strain Massachusetts / E88)).